The chain runs to 196 residues: Interleukin-23 subunit alpha (196 aa).

The signal sequence occupies residues 1-21 (MLDCRAVIMLWLLPWVTQGLA).

The protein belongs to the IL-6 superfamily. Heterodimer with IL12B; disulfide-linked. The heterodimer is known as interleukin IL-23. Interacts with IL23R; this interaction enables recruitment of IL12RB1. In terms of tissue distribution, secreted by activated dendritic cells (at protein level). Detected in various tissues with higher expression in polarized Th1 cells and activated macrophages.

It localises to the secreted. Associates with IL12B to form the IL-23 interleukin, a heterodimeric cytokine which functions in innate and adaptive immunity. IL-23 may constitute with IL-17 an acute response to infection in peripheral tissues. IL-23 binds to a heterodimeric receptor complex composed of IL12RB1 and IL23R, activates the Jak-Stat signaling cascade, stimulates memory rather than naive T-cells and promotes production of pro-inflammatory cytokines. IL-23 induces autoimmune inflammation and thus may be responsible for autoimmune inflammatory diseases and may be important for tumorigenesis. Its function is as follows. Associates with IL12B to form the pro-inflammatory cytokine IL-23 that plays different roles in innate and adaptive immunity. Released by antigen-presenting cells such as dendritic cells or macrophages, binds to a heterodimeric receptor complex composed of IL12RB1 and IL23R to activate JAK2 and TYK2 which then phosphorylate the receptor to form a docking site leading to the phosphorylation of STAT3 and STAT4. This process leads to activation of several pathways including p38 MAPK or NF-kappa-B and promotes the production of pro-inflammatory cytokines such as interleukin-17A/IL17A. In turn, participates in the early and effective intracellular bacterial clearance. Promotes the expansion and survival of T-helper 17 cells, a CD4-positive helper T-cell subset that produces IL-17, as well as other IL-17-producing cells. This Mus musculus (Mouse) protein is Interleukin-23 subunit alpha (Il23a).